The chain runs to 281 residues: Undecaprenyl-diphosphatase (281 aa).

Helical transmembrane passes span 1–21 (MNVLQGLLLGLIQGLTEFLPI), 45–65 (WTAFIAVIQLGTMAAVLIYFA), 93–113 (SKLGWYVILGSLPVATFGLVF), 125–145 (LIVISASLIVFGILLGVSEVV), 155–175 (ISWLDALVVGFAQVMALVPGA), 195–215 (AARFSFLLSIPAVMASGLLEF), 227–247 (FLVLASATLMSAVSGYLTIAF), and 256–276 (STNVFVVYRVVLGGALLWMVF).

This sequence belongs to the UppP family.

The protein localises to the cell inner membrane. The enzyme catalyses di-trans,octa-cis-undecaprenyl diphosphate + H2O = di-trans,octa-cis-undecaprenyl phosphate + phosphate + H(+). Its function is as follows. Catalyzes the dephosphorylation of undecaprenyl diphosphate (UPP). Confers resistance to bacitracin. In Syntrophobacter fumaroxidans (strain DSM 10017 / MPOB), this protein is Undecaprenyl-diphosphatase.